Reading from the N-terminus, the 148-residue chain is Deoxyuridine 5'-triphosphate nucleotidohydrolase (148 aa).

Residues 68 to 70 (RSG), asparagine 81, 85 to 87 (TID), and lysine 95 contribute to the substrate site.

This sequence belongs to the dUTPase family. Mg(2+) serves as cofactor.

It carries out the reaction dUTP + H2O = dUMP + diphosphate + H(+). The protein operates within pyrimidine metabolism; dUMP biosynthesis; dUMP from dCTP (dUTP route): step 2/2. Functionally, this enzyme is involved in nucleotide metabolism: it produces dUMP, the immediate precursor of thymidine nucleotides and it decreases the intracellular concentration of dUTP so that uracil cannot be incorporated into DNA. This is Deoxyuridine 5'-triphosphate nucleotidohydrolase from Rickettsia prowazekii (strain Madrid E).